The primary structure comprises 297 residues: Phosphatidylinositol N-acetylglucosaminyltransferase subunit C (297 aa).

4 consecutive transmembrane segments (helical) span residues 67-87, 88-108, 153-173, and 239-259; these read VFVVIWWYMDEGLLAPQWLFG, TGLASSLVGYVLFDLIDGGDG, SVFMLLGHLIFFDYGANAAIV, and AFGGLLSISGVGAILFALLLF.

The protein belongs to the PIGC family. As to quaternary structure, component of the glycosylphosphatidylinositol-N-acetylglucosaminyltransferase (GPI-GnT) complex composed at least by PIGA, PIGC, PIGH, PIGP, PIGQ, PIGY and DPM2. Interacts with PIGQ. Interacts with the heterodimer PIGA:PIGH.

The protein localises to the endoplasmic reticulum membrane. It participates in glycolipid biosynthesis; glycosylphosphatidylinositol-anchor biosynthesis. Functionally, part of the glycosylphosphatidylinositol-N-acetylglucosaminyltransferase (GPI-GnT) complex that catalyzes the transfer of N-acetylglucosamine from UDP-N-acetylglucosamine to phosphatidylinositol and participates in the first step of GPI biosynthesis. In Rattus norvegicus (Rat), this protein is Phosphatidylinositol N-acetylglucosaminyltransferase subunit C.